We begin with the raw amino-acid sequence, 369 residues long: Somatostatin receptor type 2 (369 aa).

Topologically, residues 1–43 (MDMAYELLNGSQPWLSSPFDLNGSVATANSSNQTEPYYDLTSN) are extracellular. Residues N9, N22, N29, and N32 are each glycosylated (N-linked (GlcNAc...) asparagine). A helical transmembrane segment spans residues 44 to 67 (AVLTFIYFVVCIIGLCGNTLVIYV). Over 68–78 (ILRYAKMKTIT) the chain is Cytoplasmic. A helical membrane pass occupies residues 79 to 103 (NIYILNLAIADELFMLGLPFLAMQV). The Extracellular portion of the chain corresponds to 104 to 118 (ALVHWPFGKAICRVV). A disulfide bridge connects residues C115 and C193. A helical membrane pass occupies residues 119-138 (MTVDGINQFTSIFCLTVMSI). At 139–161 (DRYLAVVHPIKSAKWRRPRTAKM) the chain is on the cytoplasmic side. A helical transmembrane segment spans residues 162-181 (INVAVWGVSLLVILPIMIYA). The Extracellular segment spans residues 182-207 (GLRSNQWGRSSCTINWPGESGAWYTG). Residues 208-229 (FIIYAFILGFLVPLTIICLCYL) form a helical membrane-spanning segment. Residues 230-253 (FIIIKVKSSGIRVGSSKRKKSEKK) are Cytoplasmic-facing. A helical transmembrane segment spans residues 254-278 (VTRMVSIVVAVFIFCWLPFYIFNVS). Residues 279–288 (SVSVAISPTP) are Extracellular-facing. The chain crosses the membrane as a helical span at residues 289–303 (ALKGMFDFVVVLTYA). The Cytoplasmic portion of the chain corresponds to 304–369 (NSCANPILYA…LLNGDLQTSI (66 aa)). C328 carries the S-palmitoyl cysteine lipid modification. Phosphoserine occurs at positions 341, 343, and 348. Phosphothreonine occurs at positions 353 and 354.

Belongs to the G-protein coupled receptor 1 family. As to quaternary structure, homodimer and heterodimer with SSTR3 and SSTR5. Heterodimerization with SSTR3 inactivates SSTR3 receptor function. Heterodimerization with SSTR5 is enhanced by agonist stimulation of SSTR2 and increases SSTR2 cell growth inhibition activity. Following agonist stimulation, homodimers dissociate into monomers which is required for receptor internalization. Interacts with beta-arrestin; this interaction is necessary for receptor internalization and is destabilized by heterodimerization with SSTR5 which results in increased recycling of SSTR2 to the cell surface. Interacts (via C-terminus) with SHANK1 (via PDZ domain). Phosphorylated on serine and threonine residues in response to agonist stimulation, leading to receptor desensitization and rapid internalization. Phosphorylated to a greater extent on serine than threonine residues. Threonine phosphorylation is required for arrestin binding and receptor endocytosis but is not necessary for desensitization.

It localises to the cell membrane. It is found in the cytoplasm. Its function is as follows. Receptor for somatostatin-14 and -28. This receptor is coupled via pertussis toxin sensitive G proteins to inhibition of adenylyl cyclase. In addition it stimulates phosphotyrosine phosphatase and PLC via pertussis toxin insensitive as well as sensitive G proteins. Inhibits calcium entry by suppressing voltage-dependent calcium channels. Acts as the functionally dominant somatostatin receptor in pancreatic alpha- and beta-cells where it mediates the inhibitory effect of somatostatin-14 on hormone secretion. Inhibits cell growth through enhancement of MAPK1 and MAPK2 phosphorylation and subsequent up-regulation of CDKN1B. Stimulates neuronal migration and axon outgrowth and may participate in neuron development and maturation during brain development. Mediates negative regulation of insulin receptor signaling through PTPN6. Inactivates SSTR3 receptor function following heterodimerization. The sequence is that of Somatostatin receptor type 2 (SSTR2) from Sus scrofa (Pig).